The following is a 432-amino-acid chain: Benzoyl-CoA reductase subunit B (432 aa).

This sequence belongs to the FldB/FldC dehydratase alpha/beta subunit family. Heterotetramer composed of A, B, C, and D subunits. Requires iron-sulfur cluster as cofactor. It depends on an oxidized flavin as a cofactor.

The catalysed reaction is cyclohexa-1,5-diene-1-carbonyl-CoA + oxidized 2[4Fe-4S]-[ferredoxin] + 2 ADP + 2 phosphate = reduced 2[4Fe-4S]-[ferredoxin] + benzoyl-CoA + 2 ATP + 2 H2O. The enzyme catalyses 3-hydroxybenzoyl-CoA + AH2 + 2 ATP + 2 H2O = 3-hydroxycyclohexa-1,5-diene-1-carbonyl-CoA + A + 2 ADP + 2 phosphate + 2 H(+). Catalyzes the anaerobic reduction of benzoyl-CoA and 3-hydroxybenzoyl-CoA to form cyclohexa-1,5-diene-1-carbonyl-CoA and 3-hydroxycyclohexa-1,5-diene-1-carbonyl-CoA, respectively. The enzyme also reduces other benzoyl-CoA analogs with small substituents at the aromatic ring. The sequence is that of Benzoyl-CoA reductase subunit B (bcrB) from Thauera aromatica.